The sequence spans 449 residues: Cortexillin-2 (449 aa).

Positions 1–231 (MTDLHKEWEK…ILYTSLFFHA (231 aa)) are actin-binding. Calponin-homology (CH) domains lie at 10-119 (KVQE…RKYR) and 128-233 (KSSE…HAYR). Coiled-coil stretches lie at residues 232 to 364 (YRAK…AEGL) and 408 to 441 (QFEEQAKRLGSKVENENISLEKYLSLKEEELKSA).

The protein belongs to the cortexillin family. Homodimer; parallel.

Its subcellular location is the cytoplasm. It localises to the cytoskeleton. Functionally, actin-bundling protein. When linked to F-actin the actin filaments form preferentially anti-parallel bundles that associate into meshworks. Plays a major role in cytokinesis. The sequence is that of Cortexillin-2 (ctxB) from Heterostelium pallidum (strain ATCC 26659 / Pp 5 / PN500) (Cellular slime mold).